Consider the following 502-residue polypeptide: Sodium/proline symporter (502 aa).

A run of 13 helical transmembrane segments spans residues 6–26 (PMLV…FIAW), 42–62 (LGPF…WLLM), 68–88 (IFLS…GAWI), 127–147 (IISA…GIVA), 163–183 (ALWA…FLAV), 192–212 (SLMI…VGGF), 235–255 (FVAI…PHIL), 276–296 (TWMI…IAYF), 320–340 (ILFN…AVMS), 371–391 (LVWV…ALAA), 398–418 (LGLV…VVLF), 430–450 (ALAG…YGWL), and 452–472 (LYEI…FSLL).

It belongs to the sodium:solute symporter (SSF) (TC 2.A.21) family.

It localises to the cell inner membrane. The catalysed reaction is L-proline(in) + Na(+)(in) = L-proline(out) + Na(+)(out). Functionally, catalyzes the sodium-dependent uptake of extracellular L-proline. This is Sodium/proline symporter from Salmonella typhimurium (strain LT2 / SGSC1412 / ATCC 700720).